Here is a 318-residue protein sequence, read N- to C-terminus: Forkhead box protein I2 (318 aa).

Residues 1 to 30 (MATYCDDLGPSSAPPGQAQATAHPPGYEPG) form a disordered region. Residues 102–196 (RPPYSYSALI…DNGNFRRKRK (95 aa)) constitute a DNA-binding region (fork-head).

Its subcellular location is the nucleus. Its function is as follows. Possible transcriptional activator. This Homo sapiens (Human) protein is Forkhead box protein I2 (FOXI2).